A 164-amino-acid chain; its full sequence is Phosphopantetheine adenylyltransferase (164 aa).

Threonine 9 contributes to the substrate binding site. ATP is bound by residues 9 to 10 (TF) and histidine 17. Residues lysine 41, threonine 76, and arginine 90 each coordinate substrate. Residues 91-93 (GLR), glutamate 101, and 126-132 (YQFVSSS) contribute to the ATP site.

The protein belongs to the bacterial CoaD family. As to quaternary structure, homohexamer. Requires Mg(2+) as cofactor.

Its subcellular location is the cytoplasm. The catalysed reaction is (R)-4'-phosphopantetheine + ATP + H(+) = 3'-dephospho-CoA + diphosphate. The protein operates within cofactor biosynthesis; coenzyme A biosynthesis; CoA from (R)-pantothenate: step 4/5. Functionally, reversibly transfers an adenylyl group from ATP to 4'-phosphopantetheine, yielding dephospho-CoA (dPCoA) and pyrophosphate. The protein is Phosphopantetheine adenylyltransferase of Coprothermobacter proteolyticus (strain ATCC 35245 / DSM 5265 / OCM 4 / BT).